A 288-amino-acid polypeptide reads, in one-letter code: Small ribosomal subunit protein uS3 (288 aa).

In terms of domain architecture, KH type-2 spans 38 to 106 (IRRMMSKGLE…QVQLNIIEVK (69 aa)). The tract at residues 209-288 (PGRETPAEAP…TQPAETQQEG (80 aa)) is disordered. Residues 219–232 (SRPRRERGDRSERP) are compositionally biased toward basic and acidic residues. The segment covering 249-264 (AGRAAATTIAQAAETP) has biased composition (low complexity). The segment covering 277–288 (AATQPAETQQEG) has biased composition (polar residues).

It belongs to the universal ribosomal protein uS3 family. Part of the 30S ribosomal subunit. Forms a tight complex with proteins S10 and S14.

Functionally, binds the lower part of the 30S subunit head. Binds mRNA in the 70S ribosome, positioning it for translation. This is Small ribosomal subunit protein uS3 from Salinispora arenicola (strain CNS-205).